A 976-amino-acid chain; its full sequence is Chitin synthase 3A (976 aa).

Positions 29-72 (DDANASNRSPVSNPYEPDYDQLSPPPMLGAQRPVPEQNESSRDL) are disordered. Residues 31–40 (ANASNRSPVS) show a composition bias toward polar residues. N-linked (GlcNAc...) asparagine glycans are attached at residues Asn32, Asn66, Asn95, and Asn602. 7 helical membrane passes run 639-659 (LLNVLFSWFSLAAFYLTTTII), 684-704 (IVNVLIKYIYIAFLVLQFVLA), 717-737 (VLSFMVFGLIQLYLLVLTGYL), 773-793 (LIIIALITIYGLNYIASFLYL), 801-821 (SFPQYLVLMSTYINILMVYAF), 903-923 (TGLVILWLLCNIVLITFVTTD), and 944-964 (FLLYSTGVLSIVRFIGFLWFI).

Belongs to the chitin synthase family. Class III subfamily.

The protein localises to the cell membrane. It catalyses the reaction [(1-&gt;4)-N-acetyl-beta-D-glucosaminyl](n) + UDP-N-acetyl-alpha-D-glucosamine = [(1-&gt;4)-N-acetyl-beta-D-glucosaminyl](n+1) + UDP + H(+). In terms of biological role, polymerizes chitin, a structural polymer of the cell wall and septum, by transferring the sugar moiety of UDP-GlcNAc to the non-reducing end of the growing chitin polymer. Shows additive effects in septum formation with CHS1, CHS2, CHS4, CHS5, CHS6 and CHS7. Involved in virulence and mediates mycotoxin deoxinivalenol (DON) biosynthesis via the regulation of the expression of TRI4, TRI5 and TRI6. The polypeptide is Chitin synthase 3A (Gibberella zeae (strain ATCC MYA-4620 / CBS 123657 / FGSC 9075 / NRRL 31084 / PH-1) (Wheat head blight fungus)).